Here is a 172-residue protein sequence, read N- to C-terminus: Protein GrpE (172 aa).

A compositionally biased stretch (low complexity) spans 1–11 (MSEENNSQNSN). Positions 1–22 (MSEENNSQNSNPPNPENGEIAS) are disordered.

It belongs to the GrpE family. Homodimer.

The protein resides in the cytoplasm. Participates actively in the response to hyperosmotic and heat shock by preventing the aggregation of stress-denatured proteins, in association with DnaK and GrpE. It is the nucleotide exchange factor for DnaK and may function as a thermosensor. Unfolded proteins bind initially to DnaJ; upon interaction with the DnaJ-bound protein, DnaK hydrolyzes its bound ATP, resulting in the formation of a stable complex. GrpE releases ADP from DnaK; ATP binding to DnaK triggers the release of the substrate protein, thus completing the reaction cycle. Several rounds of ATP-dependent interactions between DnaJ, DnaK and GrpE are required for fully efficient folding. This is Protein GrpE from Bdellovibrio bacteriovorus (strain ATCC 15356 / DSM 50701 / NCIMB 9529 / HD100).